The primary structure comprises 20 residues: Apidaecin 1+ (20 aa).

A disordered region spans residues 1 to 20; the sequence is GKPNRPRPAPIQPRPPHPRL.

Belongs to the apidaecin family.

It localises to the secreted. In terms of biological role, antimicrobial peptide active against many Gram-negative enterobacterial and plant-associated bacterial species. Not active against other bacterial species like H.pylori, P.mirabilis, B.pertussis or N.gonorrhoeae. Functionally, among others, also active against C.jejuni and L.pneumophila but not against Y.enterocolitica. Among others, also active against Y.enterocolitica butnot against L.pneumophila and C.jejuni. The chain is Apidaecin 1+ from Pimpla disparis (Parasitic wasp).